Reading from the N-terminus, the 165-residue chain is Cell division protein SepF (165 aa).

The disordered stretch occupies residues 23–75 (DEYGDYAGDYETQETAPVATRSSKRESRPAPVSDLSERRRPASGPTGVVAELS).

The protein belongs to the SepF family. As to quaternary structure, homodimer. Interacts with FtsZ.

Its subcellular location is the cytoplasm. Its function is as follows. Cell division protein that is part of the divisome complex and is recruited early to the Z-ring. Probably stimulates Z-ring formation, perhaps through the cross-linking of FtsZ protofilaments. Its function overlaps with FtsA. This Nocardioides sp. (strain ATCC BAA-499 / JS614) protein is Cell division protein SepF.